A 438-amino-acid polypeptide reads, in one-letter code: Coenzyme A disulfide reductase (438 aa).

An FAD-binding site is contributed by 8-33 (GAVAGGATCASQIRRLDKESDIIIFE). Residues Thr15, Gln19, Arg22, Ser39, and Asn42 each coordinate substrate. Cys43 acts as the Nucleophile in catalysis. The Redox-active role is filled by Cys43. Lys71 lines the substrate pocket. Position 151–166 (151–166 (VLVIGAGYVSLEVLEN)) interacts with NADP(+). 267-277 (TNVPNIYAIGD) is a binding site for FAD. Residue His299 participates in substrate binding. Tyr419 contacts FAD. Lys427 lines the substrate pocket.

The protein belongs to the class-III pyridine nucleotide-disulfide oxidoreductase family. As to quaternary structure, homodimer. FAD serves as cofactor.

It catalyses the reaction NADP(+) + 2 CoA = CoA-disulfide + NADPH + H(+). Functionally, catalyzes specifically the NADPH-dependent reduction of coenzyme A disulfide. In Staphylococcus aureus (strain Mu3 / ATCC 700698), this protein is Coenzyme A disulfide reductase.